A 527-amino-acid chain; its full sequence is Bifunctional pantoate ligase/cytidylate kinase (527 aa).

Residues Met-1–Leu-277 are pantoate--beta-alanine ligase. Position 27-34 (Met-27–His-34) interacts with ATP. His-34 (proton donor) is an active-site residue. Position 58 (Gln-58) interacts with (R)-pantoate. Gln-58 contributes to the beta-alanine binding site. Gly-147–Asp-150 contributes to the ATP binding site. Gln-153 is a (R)-pantoate binding site. ATP contacts are provided by residues Val-176 and Leu-184–Arg-187. A cytidylate kinase region spans residues Thr-278–Gly-527. Residues Gly-507 to Gly-527 are disordered. The segment covering Ser-511–Gly-527 has biased composition (polar residues).

This sequence in the N-terminal section; belongs to the pantothenate synthetase family. It in the C-terminal section; belongs to the cytidylate kinase family. Type 1 subfamily.

The protein resides in the cytoplasm. The enzyme catalyses (R)-pantoate + beta-alanine + ATP = (R)-pantothenate + AMP + diphosphate + H(+). The catalysed reaction is CMP + ATP = CDP + ADP. It carries out the reaction dCMP + ATP = dCDP + ADP. The protein operates within cofactor biosynthesis; (R)-pantothenate biosynthesis; (R)-pantothenate from (R)-pantoate and beta-alanine: step 1/1. Its function is as follows. Catalyzes the condensation of pantoate with beta-alanine in an ATP-dependent reaction via a pantoyl-adenylate intermediate. Functionally, catalyzes the transfer of a phosphate group from ATP to either CMP or dCMP to form CDP or dCDP and ADP, respectively. The chain is Bifunctional pantoate ligase/cytidylate kinase from Synechococcus elongatus (strain ATCC 33912 / PCC 7942 / FACHB-805) (Anacystis nidulans R2).